A 136-amino-acid chain; its full sequence is Histone H3.1 (136 aa).

The disordered stretch occupies residues 1–41 (MARTKQTARKSTGGKAPRKQLATKAARKSAPAAGGVKKPHR). An N6,N6,N6-trimethyllysine; alternate modification is found at Lys5. Lys5 is subject to N6,N6-dimethyllysine; alternate. 2 positions are modified to N6-methyllysine; alternate: Lys5 and Lys10. Lys10 bears the N6-acetyllysine; alternate mark. A Phosphoserine modification is found at Ser11. Residue Lys15 is modified to N6,N6-dimethyllysine; alternate. Residues Lys15, Lys19, Lys24, Lys28, and Lys37 each carry the N6-acetyllysine; alternate modification. N6-methyllysine; alternate occurs at positions 19, 24, 28, and 37. Low complexity predominate over residues 22 to 33 (ATKAARKSAPAA). Lys28 and Lys37 each carry N6,N6,N6-trimethyllysine; alternate. N6,N6-dimethyllysine; alternate is present on residues Lys28 and Lys37. Lys57 and Lys65 each carry N6-acetyllysine. Lys80 is subject to N6,N6,N6-trimethyllysine; alternate. At Lys80 the chain carries N6,N6-dimethyllysine; alternate. The residue at position 80 (Lys80) is an N6-methyllysine; alternate.

Belongs to the histone H3 family. The nucleosome is a histone octamer containing two molecules each of H2A, H2B, H3 and H4 assembled in one H3-H4 heterotetramer and two H2A-H2B heterodimers. The octamer wraps approximately 147 bp of DNA. Post-translationally, phosphorylated to form H3S10ph. H3S10ph promotes subsequent H3K14ac formation and is required for transcriptional activation through TBP recruitment to the promoters. Mono-, di- and trimethylated by the COMPASS complex to form H3K4me1/2/3. H3K4me activates gene expression by regulating transcription elongation and plays a role in telomere length maintenance. H3K4me enrichment correlates with transcription levels, and occurs in a 5' to 3' gradient with H3K4me3 enrichment at the 5'-end of genes, shifting to H3K4me2 and then H3K4me1. Methylated by SET2 to form H3K36me. H3K36me represses gene expression. Methylated by DOT1 to form H3K79me. H3K79me is required for association of SIR proteins with telomeric regions and for telomeric silencing. The COMPASS-mediated formation of H3K4me2/3 and the DOT1-mediated formation of H3K79me require H2BK123ub1. In terms of processing, acetylation of histone H3 leads to transcriptional activation. H3K14ac formation by GCN5 is promoted by H3S10ph. H3K14ac can also be formed by ESA1. H3K56ac formation occurs predominantly in newly synthesized H3 molecules during G1, S and G2/M of the cell cycle and may be involved in DNA repair.

The protein resides in the nucleus. Its subcellular location is the chromosome. Its function is as follows. Core component of nucleosome. Nucleosomes wrap and compact DNA into chromatin, limiting DNA accessibility to the cellular machineries which require DNA as a template. Histones thereby play a central role in transcription regulation, DNA repair, DNA replication and chromosomal stability. DNA accessibility is regulated via a complex set of post-translational modifications of histones, also called histone code, and nucleosome remodeling. The chain is Histone H3.1 (HHT1) from Mycosarcoma maydis (Corn smut fungus).